A 257-amino-acid polypeptide reads, in one-letter code: Small ribosomal subunit protein uS2 (257 aa).

Belongs to the universal ribosomal protein uS2 family.

The polypeptide is Small ribosomal subunit protein uS2 (Trichlorobacter lovleyi (strain ATCC BAA-1151 / DSM 17278 / SZ) (Geobacter lovleyi)).